Consider the following 274-residue polypeptide: NH(3)-dependent NAD(+) synthetase (274 aa).

ATP is bound at residue 46 to 53 (GISGGQDS). D52 is a Mg(2+) binding site. R140 is a binding site for deamido-NAD(+). Residue T160 participates in ATP binding. E165 lines the Mg(2+) pocket. Deamido-NAD(+) contacts are provided by K173 and D180. Residues K189 and T211 each contribute to the ATP site. 260–261 (HK) serves as a coordination point for deamido-NAD(+).

The protein belongs to the NAD synthetase family. As to quaternary structure, homodimer.

The catalysed reaction is deamido-NAD(+) + NH4(+) + ATP = AMP + diphosphate + NAD(+) + H(+). It participates in cofactor biosynthesis; NAD(+) biosynthesis; NAD(+) from deamido-NAD(+) (ammonia route): step 1/1. Catalyzes the ATP-dependent amidation of deamido-NAD to form NAD. Uses ammonia as a nitrogen source. In Listeria innocua serovar 6a (strain ATCC BAA-680 / CLIP 11262), this protein is NH(3)-dependent NAD(+) synthetase.